Reading from the N-terminus, the 282-residue chain is V-set domain-containing T-cell activation inhibitor 1 (282 aa).

The signal sequence occupies residues 1–24 (MASLGQIIFWSIINVIIILAGAIV). Ig-like V-type domains follow at residues 35–144 (HFIT…ANLE) and 153–241 (PEIN…IKVT). 2 disulfide bridges follow: Cys56–Cys130 and Cys168–Cys225. The N-linked (GlcNAc...) asparagine glycan is linked to Asn216. Gly257 carries GPI-anchor amidated glycine lipidation. Positions 258–282 (PSPCVSSVSAAGWALLSLSCCLMLR) are cleaved as a propeptide — removed in mature form.

Belongs to the immunoglobulin superfamily. BTN/MOG family. N-glycosylated.

It is found in the cell membrane. Functionally, negatively regulates T-cell-mediated immune response by inhibiting T-cell activation, proliferation, cytokine production and development of cytotoxicity. When expressed on the cell surface of tumor macrophages, plays an important role, together with regulatory T-cells (Treg), in the suppression of tumor-associated antigen-specific T-cell immunity. Involved in promoting epithelial cell transformation. This chain is V-set domain-containing T-cell activation inhibitor 1, found in Rattus norvegicus (Rat).